Reading from the N-terminus, the 267-residue chain is GTP cyclohydrolase FolE2 (267 aa).

It belongs to the GTP cyclohydrolase IV family.

It carries out the reaction GTP + H2O = 7,8-dihydroneopterin 3'-triphosphate + formate + H(+). Its pathway is cofactor biosynthesis; 7,8-dihydroneopterin triphosphate biosynthesis; 7,8-dihydroneopterin triphosphate from GTP: step 1/1. Functionally, converts GTP to 7,8-dihydroneopterin triphosphate. This chain is GTP cyclohydrolase FolE2, found in Geobacter sp. (strain M21).